Here is a 447-residue protein sequence, read N- to C-terminus: Probable glycine dehydrogenase (decarboxylating) subunit 1 (447 aa).

This sequence belongs to the GcvP family. N-terminal subunit subfamily. As to quaternary structure, the glycine cleavage system is composed of four proteins: P, T, L and H. In this organism, the P 'protein' is a heterodimer of two subunits.

It carries out the reaction N(6)-[(R)-lipoyl]-L-lysyl-[glycine-cleavage complex H protein] + glycine + H(+) = N(6)-[(R)-S(8)-aminomethyldihydrolipoyl]-L-lysyl-[glycine-cleavage complex H protein] + CO2. Functionally, the glycine cleavage system catalyzes the degradation of glycine. The P protein binds the alpha-amino group of glycine through its pyridoxal phosphate cofactor; CO(2) is released and the remaining methylamine moiety is then transferred to the lipoamide cofactor of the H protein. The sequence is that of Probable glycine dehydrogenase (decarboxylating) subunit 1 from Bacillus cytotoxicus (strain DSM 22905 / CIP 110041 / 391-98 / NVH 391-98).